The following is a 147-amino-acid chain: Large ribosomal subunit protein bL9 (147 aa).

This sequence belongs to the bacterial ribosomal protein bL9 family.

Binds to the 23S rRNA. This Gemmatimonas aurantiaca (strain DSM 14586 / JCM 11422 / NBRC 100505 / T-27) protein is Large ribosomal subunit protein bL9.